The following is a 252-amino-acid chain: MQPAIKLRNIELGSCRPKLAVPITGTTINDILAATTPILAAQPDVVEWRIDFFKDVTNPEQLKSAGQQLRQALGDIALLTTFRTKGEGGELALSDTEYFKLCETVLDGGFTDALDVERYHDEQAVKQIVAAAHEHQVVVIMSNHDFDKTPAVAEIVKRLTSMVDYGADVAKMAVMPQSVEDVLTLLTATNIARQTLPQPVITMSMGDLGKVSRLAGEVFGSCLSFATVGAASAPGQIALENLRPELEDLKLN.

3-dehydroquinate contacts are provided by residues 47-49 (EWR) and Arg83. His144 functions as the Proton donor/acceptor in the catalytic mechanism. Lys171 serves as the catalytic Schiff-base intermediate with substrate. Arg213, Ser232, and Gln236 together coordinate 3-dehydroquinate.

It belongs to the type-I 3-dehydroquinase family. Homodimer.

It carries out the reaction 3-dehydroquinate = 3-dehydroshikimate + H2O. It participates in metabolic intermediate biosynthesis; chorismate biosynthesis; chorismate from D-erythrose 4-phosphate and phosphoenolpyruvate: step 3/7. In terms of biological role, involved in the third step of the chorismate pathway, which leads to the biosynthesis of aromatic amino acids. Catalyzes the cis-dehydration of 3-dehydroquinate (DHQ) and introduces the first double bond of the aromatic ring to yield 3-dehydroshikimate. The chain is 3-dehydroquinate dehydratase from Lactiplantibacillus plantarum (strain ATCC BAA-793 / NCIMB 8826 / WCFS1) (Lactobacillus plantarum).